A 217-amino-acid chain; its full sequence is Holliday junction branch migration complex subunit RuvA (217 aa).

Positions 1–64 (MIGKLTGILD…EDAIRLFGFE (64 aa)) are domain I. Positions 65–145 (TKVEQDWFCL…NAPHQSMPHF (81 aa)) are domain II. Residues 146-160 (VSYSSETSSQAGTQH) form a flexible linker region. The domain III stretch occupies residues 161–217 (TGHQHSMDALAALTKLGFERDQATHALQEAIKAFEGETPSSALLIRHSLKLLSSHLK).

It belongs to the RuvA family. In terms of assembly, homotetramer. Forms an RuvA(8)-RuvB(12)-Holliday junction (HJ) complex. HJ DNA is sandwiched between 2 RuvA tetramers; dsDNA enters through RuvA and exits via RuvB. An RuvB hexamer assembles on each DNA strand where it exits the tetramer. Each RuvB hexamer is contacted by two RuvA subunits (via domain III) on 2 adjacent RuvB subunits; this complex drives branch migration. In the full resolvosome a probable DNA-RuvA(4)-RuvB(12)-RuvC(2) complex forms which resolves the HJ.

It localises to the cytoplasm. Its function is as follows. The RuvA-RuvB-RuvC complex processes Holliday junction (HJ) DNA during genetic recombination and DNA repair, while the RuvA-RuvB complex plays an important role in the rescue of blocked DNA replication forks via replication fork reversal (RFR). RuvA specifically binds to HJ cruciform DNA, conferring on it an open structure. The RuvB hexamer acts as an ATP-dependent pump, pulling dsDNA into and through the RuvAB complex. HJ branch migration allows RuvC to scan DNA until it finds its consensus sequence, where it cleaves and resolves the cruciform DNA. The sequence is that of Holliday junction branch migration complex subunit RuvA from Bartonella bacilliformis (strain ATCC 35685 / KC583 / Herrer 020/F12,63).